Consider the following 555-residue polypeptide: Urocanate hydratase (555 aa).

Residues 52–53 (GG), Gln-130, 176–178 (GMG), Glu-196, Arg-201, 242–243 (NA), 263–267 (QTSAH), 273–274 (YL), and Tyr-322 each bind NAD(+). The active site involves Cys-410. Position 492 (Gly-492) interacts with NAD(+).

This sequence belongs to the urocanase family. Requires NAD(+) as cofactor.

It localises to the cytoplasm. The enzyme catalyses 4-imidazolone-5-propanoate = trans-urocanate + H2O. It participates in amino-acid degradation; L-histidine degradation into L-glutamate; N-formimidoyl-L-glutamate from L-histidine: step 2/3. In terms of biological role, catalyzes the conversion of urocanate to 4-imidazolone-5-propionate. This Shewanella baltica (strain OS223) protein is Urocanate hydratase.